The primary structure comprises 255 residues: uncharacterized protein (255 aa).

The region spanning 3-58 (PVERRQIILEMVAEKGIVSIAELTDRMNVSHMTIRRDLQKLEQQGAVVLVSGGVQS) is the HTH deoR-type domain. The H-T-H motif DNA-binding region spans 20-39 (VSIAELTDRMNVSHMTIRRD).

This is an uncharacterized protein from Escherichia coli (strain K12).